The chain runs to 291 residues: Phosphatidylglycerol--prolipoprotein diacylglyceryl transferase (291 aa).

4 helical membrane passes run 24 to 44 (WYAL…RALL), 64 to 84 (FILW…VLFY), 99 to 119 (IWKG…AVIL), and 125 to 145 (GLPI…GLFL). Arginine 147 contacts a 1,2-diacyl-sn-glycero-3-phospho-(1'-sn-glycerol). Transmembrane regions (helical) follow at residues 187–207 (ATLE…AGAL), 211–231 (GLVL…GEFF), and 247–267 (MGML…CVAW).

Belongs to the Lgt family.

The protein resides in the cell inner membrane. The catalysed reaction is L-cysteinyl-[prolipoprotein] + a 1,2-diacyl-sn-glycero-3-phospho-(1'-sn-glycerol) = an S-1,2-diacyl-sn-glyceryl-L-cysteinyl-[prolipoprotein] + sn-glycerol 1-phosphate + H(+). The protein operates within protein modification; lipoprotein biosynthesis (diacylglyceryl transfer). Functionally, catalyzes the transfer of the diacylglyceryl group from phosphatidylglycerol to the sulfhydryl group of the N-terminal cysteine of a prolipoprotein, the first step in the formation of mature lipoproteins. The polypeptide is Phosphatidylglycerol--prolipoprotein diacylglyceryl transferase (Nitrobacter hamburgensis (strain DSM 10229 / NCIMB 13809 / X14)).